The chain runs to 379 residues: Anhydro-N-acetylmuramic acid kinase (379 aa).

An ATP-binding site is contributed by Gly-12–Asp-19.

This sequence belongs to the anhydro-N-acetylmuramic acid kinase family.

The catalysed reaction is 1,6-anhydro-N-acetyl-beta-muramate + ATP + H2O = N-acetyl-D-muramate 6-phosphate + ADP + H(+). The protein operates within amino-sugar metabolism; 1,6-anhydro-N-acetylmuramate degradation. It functions in the pathway cell wall biogenesis; peptidoglycan recycling. Catalyzes the specific phosphorylation of 1,6-anhydro-N-acetylmuramic acid (anhMurNAc) with the simultaneous cleavage of the 1,6-anhydro ring, generating MurNAc-6-P. Is required for the utilization of anhMurNAc either imported from the medium or derived from its own cell wall murein, and thus plays a role in cell wall recycling. The protein is Anhydro-N-acetylmuramic acid kinase of Gloeobacter violaceus (strain ATCC 29082 / PCC 7421).